The primary structure comprises 1129 residues: Phytochrome A type 4 (1129 aa).

Low complexity predominate over residues 1–21; the sequence is MSSSRPASSSSSRNRQSSRAR. Residues 1–24 form a disordered region; that stretch reads MSSSRPASSSSSRNRQSSRARVLA. The 186-residue stretch at 217-402 folds into the GAF domain; sequence SMEVLCNTVV…VFAVHVNREF (186 aa). Residue cysteine 322 coordinates phytochromobilin. PAS domains follow at residues 618–688 and 748–822; these read VTSE…LQGK and VEGD…VSLC. The region spanning 902 to 1122 is the Histidine kinase domain; that stretch reads YMRHAINNPL…TFILTAELAS (221 aa).

It belongs to the phytochrome family. As to quaternary structure, homodimer. Contains one covalently linked phytochromobilin chromophore.

Its function is as follows. Regulatory photoreceptor which exists in two forms that are reversibly interconvertible by light: the Pr form that absorbs maximally in the red region of the spectrum and the Pfr form that absorbs maximally in the far-red region. Photoconversion of Pr to Pfr induces an array of morphogenic responses, whereas reconversion of Pfr to Pr cancels the induction of those responses. Pfr controls the expression of a number of nuclear genes including those encoding the small subunit of ribulose-bisphosphate carboxylase, chlorophyll A/B binding protein, protochlorophyllide reductase, rRNA, etc. It also controls the expression of its own gene(s) in a negative feedback fashion. This is Phytochrome A type 4 (PHYA4) from Avena sativa (Oat).